Here is a 122-residue protein sequence, read N- to C-terminus: Large ribosomal subunit protein bL20 (122 aa).

Belongs to the bacterial ribosomal protein bL20 family.

In terms of biological role, binds directly to 23S ribosomal RNA and is necessary for the in vitro assembly process of the 50S ribosomal subunit. It is not involved in the protein synthesizing functions of that subunit. The protein is Large ribosomal subunit protein bL20 (rplT) of Treponema pallidum (strain Nichols).